We begin with the raw amino-acid sequence, 934 residues long: Aconitate hydratase A (934 aa).

The segment at 398 to 454 is disordered; the sequence is EPVDESLPAKRMDSEGAVQKEGEDVAGYNSSRAGHGESAAEGAAGRQSNPVVVSSPN. Basic and acidic residues predominate over residues 404 to 420; sequence LPAKRMDSEGAVQKEGE. The span at 427–445 shows a compositional bias: low complexity; it reads SSRAGHGESAAEGAAGRQS. The [4Fe-4S] cluster site is built by Cys473, Cys539, and Cys542.

The protein belongs to the aconitase/IPM isomerase family. As to quaternary structure, monomer. The cofactor is [4Fe-4S] cluster.

It carries out the reaction citrate = D-threo-isocitrate. It catalyses the reaction (2S,3R)-3-hydroxybutane-1,2,3-tricarboxylate = 2-methyl-cis-aconitate + H2O. It functions in the pathway carbohydrate metabolism; tricarboxylic acid cycle; isocitrate from oxaloacetate: step 2/2. Its pathway is organic acid metabolism; propanoate degradation. Its function is as follows. Involved in the catabolism of short chain fatty acids (SCFA) via the tricarboxylic acid (TCA)(acetyl degradation route) and probably via the 2-methylcitrate cycle I (propionate degradation route). Catalyzes the reversible isomerization of citrate to isocitrate via cis-aconitate. Could catalyze the hydration of 2-methyl-cis-aconitate to yield (2R,3S)-2-methylisocitrate. The apo form of AcnA functions as a RNA-binding regulatory protein. The chain is Aconitate hydratase A (acn) from Corynebacterium diphtheriae (strain ATCC 700971 / NCTC 13129 / Biotype gravis).